An 83-amino-acid polypeptide reads, in one-letter code: Cytotoxin homolog 5V (83 aa).

Positions 1–21 (MKTLLLTLVVVTIVCLDLGYT) are cleaved as a signal peptide. 4 disulfides stabilise this stretch: Cys24/Cys43, Cys36/Cys61, Cys65/Cys76, and Cys77/Cys82.

This sequence belongs to the three-finger toxin family. Short-chain subfamily. Orphan group XV sub-subfamily. Expressed by the venom gland.

It is found in the secreted. Its subcellular location is the target cell membrane. Has low cytotoxic activity. In Naja atra (Chinese cobra), this protein is Cytotoxin homolog 5V.